A 302-amino-acid chain; its full sequence is 4-diphosphocytidyl-2-C-methyl-D-erythritol kinase (302 aa).

Lysine 11 is a catalytic residue. 93–103 (PVASGLAGGST) contributes to the ATP binding site. Residue aspartate 135 is part of the active site.

It belongs to the GHMP kinase family. IspE subfamily.

It carries out the reaction 4-CDP-2-C-methyl-D-erythritol + ATP = 4-CDP-2-C-methyl-D-erythritol 2-phosphate + ADP + H(+). It participates in isoprenoid biosynthesis; isopentenyl diphosphate biosynthesis via DXP pathway; isopentenyl diphosphate from 1-deoxy-D-xylulose 5-phosphate: step 3/6. In terms of biological role, catalyzes the phosphorylation of the position 2 hydroxy group of 4-diphosphocytidyl-2C-methyl-D-erythritol. This is 4-diphosphocytidyl-2-C-methyl-D-erythritol kinase from Gloeobacter violaceus (strain ATCC 29082 / PCC 7421).